The sequence spans 425 residues: Monoacylglycerol lipase ABHD2 (425 aa).

Residues 1-9 are Cytoplasmic-facing; that stretch reads MNAMLETPE. Residues 10 to 30 form a helical; Signal-anchor for type II membrane protein membrane-spanning segment; that stretch reads LPAVFDGVKLAAVAAVLYVIV. The Extracellular segment spans residues 31 to 425; it reads RCLNLKSPTA…DTEQVEADLE (395 aa). Residues 128–382 form the AB hydrolase-1 domain; sequence MVICPGIANH…HGGHLGFFEG (255 aa). Residue asparagine 136 is glycosylated (N-linked (GlcNAc...) asparagine). Serine 207 (nucleophile) is an active-site residue. Catalysis depends on charge relay system residues aspartate 345 and histidine 376. Asparagine 410 is a glycosylation site (N-linked (GlcNAc...) asparagine).

It belongs to the AB hydrolase superfamily. AB hydrolase 4 family.

It localises to the cell membrane. The catalysed reaction is Hydrolyzes glycerol monoesters of long-chain fatty acids.. The enzyme catalyses an acetyl ester + H2O = an aliphatic alcohol + acetate + H(+). It catalyses the reaction a triacylglycerol + H2O = a diacylglycerol + a fatty acid + H(+). It carries out the reaction 2-(5Z,8Z,11Z,14Z-eicosatetraenoyl)-glycerol + H2O = glycerol + (5Z,8Z,11Z,14Z)-eicosatetraenoate + H(+). The catalysed reaction is a butanoate ester + H2O = an aliphatic alcohol + butanoate + H(+). The enzyme catalyses hexadecanoate ester + H2O = an aliphatic alcohol + hexadecanoate + H(+). Acylglycerol lipase activity is activated upon binding to progesterone. In terms of biological role, progesterone-dependent acylglycerol lipase that catalyzes hydrolysis of endocannabinoid arachidonoylglycerol (AG) from cell membrane. Acts as a progesterone receptor: progesterone-binding activates the acylglycerol lipase activity, mediating degradation of 1-arachidonoylglycerol (1AG) and 2-arachidonoylglycerol (2AG) to glycerol and arachidonic acid (AA). Also displays an ester hydrolase activity against acetyl ester, butanoate ester and hexadecanoate ester. Plays a key role in sperm capacitation in response to progesterone by mediating degradation of 2AG, an inhibitor of the sperm calcium channel CatSper, leading to calcium influx via CatSper and sperm activation. May also play a role in smooth muscle cells migration. The sequence is that of Monoacylglycerol lipase ABHD2 (ABHD2) from Macaca fascicularis (Crab-eating macaque).